A 115-amino-acid chain; its full sequence is Nucleoid-associated protein LBL_0065 (115 aa).

It belongs to the YbaB/EbfC family. As to quaternary structure, homodimer.

It is found in the cytoplasm. Its subcellular location is the nucleoid. Binds to DNA and alters its conformation. May be involved in regulation of gene expression, nucleoid organization and DNA protection. The chain is Nucleoid-associated protein LBL_0065 from Leptospira borgpetersenii serovar Hardjo-bovis (strain L550).